Here is a 63-residue protein sequence, read N- to C-terminus: Defensin-like protein 278 (63 aa).

The first 15 residues, 1 to 15, serve as a signal peptide directing secretion; sequence MSLVYMYMYIGVVMS. 3 cysteine pairs are disulfide-bonded: C31–C48, C37–C53, and C41–C55.

It belongs to the DEFL family.

It localises to the secreted. The protein is Defensin-like protein 278 of Arabidopsis thaliana (Mouse-ear cress).